Reading from the N-terminus, the 67-residue chain is Theromin (67 aa).

The region spanning C2 to C27 is the Antistasin-like domain.

As to quaternary structure, homodimer. In terms of processing, eight disulfide bonds are present.

It localises to the secreted. Functionally, potent thrombin-specific inhibitor. The chain is Theromin from Theromyzon tessulatum (Duck leech).